We begin with the raw amino-acid sequence, 78 residues long: Large ribosomal subunit protein bL28 (78 aa).

This sequence belongs to the bacterial ribosomal protein bL28 family.

The protein is Large ribosomal subunit protein bL28 of Rippkaea orientalis (strain PCC 8801 / RF-1) (Cyanothece sp. (strain PCC 8801)).